A 340-amino-acid polypeptide reads, in one-letter code: Phosphoribosylformylglycinamidine cyclo-ligase (340 aa).

The protein belongs to the AIR synthase family.

The protein localises to the cytoplasm. The enzyme catalyses 2-formamido-N(1)-(5-O-phospho-beta-D-ribosyl)acetamidine + ATP = 5-amino-1-(5-phospho-beta-D-ribosyl)imidazole + ADP + phosphate + H(+). Its pathway is purine metabolism; IMP biosynthesis via de novo pathway; 5-amino-1-(5-phospho-D-ribosyl)imidazole from N(2)-formyl-N(1)-(5-phospho-D-ribosyl)glycinamide: step 2/2. This Streptococcus pyogenes serotype M2 (strain MGAS10270) protein is Phosphoribosylformylglycinamidine cyclo-ligase.